Here is a 1390-residue protein sequence, read N- to C-terminus: DNA-directed RNA polymerase subunit beta (1390 aa).

It belongs to the RNA polymerase beta chain family. The RNAP catalytic core consists of 2 alpha, 1 beta, 1 beta' and 1 omega subunit. When a sigma factor is associated with the core the holoenzyme is formed, which can initiate transcription.

It catalyses the reaction RNA(n) + a ribonucleoside 5'-triphosphate = RNA(n+1) + diphosphate. Functionally, DNA-dependent RNA polymerase catalyzes the transcription of DNA into RNA using the four ribonucleoside triphosphates as substrates. The protein is DNA-directed RNA polymerase subunit beta of Mycoplasma genitalium (strain ATCC 33530 / DSM 19775 / NCTC 10195 / G37) (Mycoplasmoides genitalium).